A 352-amino-acid polypeptide reads, in one-letter code: Photosystem II D2 protein (352 aa).

An N-acetylthreonine modification is found at Thr-2. A Phosphothreonine modification is found at Thr-2. A helical transmembrane segment spans residues Cys-40–Thr-60. His-117 serves as a coordination point for chlorophyll a. A helical membrane pass occupies residues Gly-124 to Pro-140. Positions 129 and 142 each coordinate pheophytin a. A helical transmembrane segment spans residues Val-152–Ala-165. Position 197 (His-197) interacts with chlorophyll a. The helical transmembrane segment at Ala-207–Asp-227 threads the bilayer. Positions 214 and 261 each coordinate a plastoquinone. Residue His-214 coordinates Fe cation. His-268 is a Fe cation binding site. A helical transmembrane segment spans residues Gly-278 to Arg-294.

This sequence belongs to the reaction center PufL/M/PsbA/D family. As to quaternary structure, PSII is composed of 1 copy each of membrane proteins PsbA, PsbB, PsbC, PsbD, PsbE, PsbF, PsbH, PsbI, PsbJ, PsbK, PsbL, PsbM, PsbT, PsbX, PsbY, PsbZ, Psb30/Ycf12, at least 3 peripheral proteins of the oxygen-evolving complex and a large number of cofactors. It forms dimeric complexes. The cofactor is The D1/D2 heterodimer binds P680, chlorophylls that are the primary electron donor of PSII, and subsequent electron acceptors. It shares a non-heme iron and each subunit binds pheophytin, quinone, additional chlorophylls, carotenoids and lipids. There is also a Cl(-1) ion associated with D1 and D2, which is required for oxygen evolution. The PSII complex binds additional chlorophylls, carotenoids and specific lipids..

It localises to the plastid. The protein resides in the chloroplast thylakoid membrane. It catalyses the reaction 2 a plastoquinone + 4 hnu + 2 H2O = 2 a plastoquinol + O2. In terms of biological role, photosystem II (PSII) is a light-driven water:plastoquinone oxidoreductase that uses light energy to abstract electrons from H(2)O, generating O(2) and a proton gradient subsequently used for ATP formation. It consists of a core antenna complex that captures photons, and an electron transfer chain that converts photonic excitation into a charge separation. The D1/D2 (PsbA/PsbD) reaction center heterodimer binds P680, the primary electron donor of PSII as well as several subsequent electron acceptors. D2 is needed for assembly of a stable PSII complex. This Stigeoclonium helveticum (Green alga) protein is Photosystem II D2 protein.